Reading from the N-terminus, the 335-residue chain is Ketol-acid reductoisomerase (NADP(+)) (335 aa).

Residues S5 to T185 enclose the KARI N-terminal Rossmann domain. NADP(+) is bound by residues Y28–Q31, S56, and D86–Q89. Residue H111 is part of the active site. Residue G137 coordinates NADP(+). The 146-residue stretch at T186–G331 folds into the KARI C-terminal knotted domain. Residues D194, E198, E230, and E234 each coordinate Mg(2+). S255 contacts substrate.

Belongs to the ketol-acid reductoisomerase family. The cofactor is Mg(2+).

The enzyme catalyses (2R)-2,3-dihydroxy-3-methylbutanoate + NADP(+) = (2S)-2-acetolactate + NADPH + H(+). The catalysed reaction is (2R,3R)-2,3-dihydroxy-3-methylpentanoate + NADP(+) = (S)-2-ethyl-2-hydroxy-3-oxobutanoate + NADPH + H(+). It participates in amino-acid biosynthesis; L-isoleucine biosynthesis; L-isoleucine from 2-oxobutanoate: step 2/4. Its pathway is amino-acid biosynthesis; L-valine biosynthesis; L-valine from pyruvate: step 2/4. Involved in the biosynthesis of branched-chain amino acids (BCAA). Catalyzes an alkyl-migration followed by a ketol-acid reduction of (S)-2-acetolactate (S2AL) to yield (R)-2,3-dihydroxy-isovalerate. In the isomerase reaction, S2AL is rearranged via a Mg-dependent methyl migration to produce 3-hydroxy-3-methyl-2-ketobutyrate (HMKB). In the reductase reaction, this 2-ketoacid undergoes a metal-dependent reduction by NADPH to yield (R)-2,3-dihydroxy-isovalerate. The sequence is that of Ketol-acid reductoisomerase (NADP(+)) from Saccharolobus solfataricus (strain ATCC 35092 / DSM 1617 / JCM 11322 / P2) (Sulfolobus solfataricus).